Consider the following 1127-residue polypeptide: Nck-associated protein 1-like (1127 aa).

A disordered region spans residues 638–670 (KAKNKKTRKQRQTPRKGEPERDKPGAESHRKNR). Basic residues predominate over residues 639 to 651 (AKNKKTRKQRQTP). Basic and acidic residues predominate over residues 652–666 (RKGEPERDKPGAESH). The chain crosses the membrane as a helical span at residues 996–1016 (VACLLLIFLAVSLPLLATDPS).

It belongs to the HEM-1/HEM-2 family. In terms of assembly, in hematopoietic cells, component of the WAVE2 complex composed of ABI1, CYFIP1/SRA1, NCKAP1L/HEM1 and WASF2/WAVE2. Interacts with ARHGAP4, PIK3C3/VPS34 and PPP1R12A/MYPT1. Interacts with mammalian target of rapamycin complex 2 (mTORC2) components, including MTOR and RICTOR. As to expression, expressed only in cells of hematopoietic origin. Expressed in neutrophils (at protein level). Expressed in T-cells (at protein level).

The protein resides in the cell membrane. Its subcellular location is the cytoplasm. Its function is as follows. Essential hematopoietic-specific regulator of the actin cytoskeleton. Controls lymphocyte development, activation, proliferation and homeostasis, erythrocyte membrane stability, as well as phagocytosis and migration by neutrophils and macrophages. Component of the WAVE2 complex which signals downstream of RAC to stimulate F-actin polymerization. Required for stabilization and/or translation of the WAVE2 complex proteins in hematopoietic cells. Within the WAVE2 complex, enables the cortical actin network to restrain excessive degranulation and granule release by T-cells. Required for efficient T-lymphocyte and neutrophil migration. Exhibits complex cycles of activation and inhibition to generate waves of propagating the assembly with actin. Also involved in mechanisms WAVE-independent to regulate myosin and actin polymerization during neutrophil chemotaxis. In T-cells, required for proper mechanistic target of rapamycin complex 2 (mTORC2)-dependent AKT phosphorylation, cell proliferation and cytokine secretion, including that of IL2 and TNF. This Homo sapiens (Human) protein is Nck-associated protein 1-like.